A 269-amino-acid polypeptide reads, in one-letter code: Phosphate import ATP-binding protein PstB (269 aa).

Positions 14–253 (LTLEDVSISY…EFDSTKKIFS (240 aa)) constitute an ABC transporter domain. 46-53 (GPSGCGKS) provides a ligand contact to ATP.

This sequence belongs to the ABC transporter superfamily. Phosphate importer (TC 3.A.1.7) family. The complex is composed of two ATP-binding proteins (PstB), two transmembrane proteins (PstC and PstA) and a solute-binding protein (PstS).

It localises to the cell inner membrane. It catalyses the reaction phosphate(out) + ATP + H2O = ADP + 2 phosphate(in) + H(+). Functionally, part of the ABC transporter complex PstSACB involved in phosphate import. Responsible for energy coupling to the transport system. The sequence is that of Phosphate import ATP-binding protein PstB from Prochlorococcus marinus subsp. pastoris (strain CCMP1986 / NIES-2087 / MED4).